Here is a 629-residue protein sequence, read N- to C-terminus: DNA mismatch repair protein MutL (629 aa).

Residues 376–396 (QYHEKPQQNQPHFSNTPVLPN) are disordered. The span at 382–396 (QQNQPHFSNTPVLPN) shows a compositional bias: polar residues.

The protein belongs to the DNA mismatch repair MutL/HexB family.

This protein is involved in the repair of mismatches in DNA. It is required for dam-dependent methyl-directed DNA mismatch repair. May act as a 'molecular matchmaker', a protein that promotes the formation of a stable complex between two or more DNA-binding proteins in an ATP-dependent manner without itself being part of a final effector complex. The sequence is that of DNA mismatch repair protein MutL from Haemophilus influenzae (strain PittEE).